A 600-amino-acid polypeptide reads, in one-letter code: Jacalin-related lectin 18 (600 aa).

4 Jacalin-type lectin domains span residues 12–158 (TQRL…YFTC), 161–303 (PTRM…YFTT), 304–447 (SPFI…YFRL), and 454–597 (GEKV…HVLP).

This sequence belongs to the jacalin lectin family.

This Arabidopsis thaliana (Mouse-ear cress) protein is Jacalin-related lectin 18 (JAL18).